The following is a 210-amino-acid chain: Imidazole glycerol phosphate synthase subunit HisH (210 aa).

The region spanning 1-205 (MIAVINYGAG…VELALSRGSG (205 aa)) is the Glutamine amidotransferase type-1 domain. The Nucleophile role is filled by C79. Residues H180 and E182 contribute to the active site.

In terms of assembly, heterodimer of HisH and HisF.

It localises to the cytoplasm. It catalyses the reaction 5-[(5-phospho-1-deoxy-D-ribulos-1-ylimino)methylamino]-1-(5-phospho-beta-D-ribosyl)imidazole-4-carboxamide + L-glutamine = D-erythro-1-(imidazol-4-yl)glycerol 3-phosphate + 5-amino-1-(5-phospho-beta-D-ribosyl)imidazole-4-carboxamide + L-glutamate + H(+). It carries out the reaction L-glutamine + H2O = L-glutamate + NH4(+). The protein operates within amino-acid biosynthesis; L-histidine biosynthesis; L-histidine from 5-phospho-alpha-D-ribose 1-diphosphate: step 5/9. In terms of biological role, IGPS catalyzes the conversion of PRFAR and glutamine to IGP, AICAR and glutamate. The HisH subunit catalyzes the hydrolysis of glutamine to glutamate and ammonia as part of the synthesis of IGP and AICAR. The resulting ammonia molecule is channeled to the active site of HisF. This Herpetosiphon aurantiacus (strain ATCC 23779 / DSM 785 / 114-95) protein is Imidazole glycerol phosphate synthase subunit HisH.